The primary structure comprises 118 residues: D-dopachrome decarboxylase (118 aa).

Pro2 bears the N-acetylproline mark.

This sequence belongs to the MIF family. In terms of assembly, homotrimer.

It localises to the cytoplasm. The enzyme catalyses D-dopachrome + H(+) = 5,6-dihydroxyindole + CO2. Tautomerization of D-dopachrome with decarboxylation to give 5,6-dihydroxyindole (DHI). This chain is D-dopachrome decarboxylase (DDT), found in Gallus gallus (Chicken).